The following is a 265-amino-acid chain: Putative methyltransferase 235L (265 aa).

Positions methionine 1 to cysteine 17 are cleaved as a signal peptide.

This sequence belongs to the methyltransferase superfamily.

This chain is Putative methyltransferase 235L, found in Acheta domesticus (House cricket).